Here is a 474-residue protein sequence, read N- to C-terminus: Serine--tRNA ligase (474 aa).

278–280 (TAE) contributes to the L-serine binding site. 309–311 (RSE) provides a ligand contact to ATP. Glu-332 contacts L-serine. ATP is bound at residue 396-399 (EISS). Ser-432 contributes to the L-serine binding site.

It belongs to the class-II aminoacyl-tRNA synthetase family. Type-1 seryl-tRNA synthetase subfamily. Homodimer. The tRNA molecule binds across the dimer.

It is found in the cytoplasm. The enzyme catalyses tRNA(Ser) + L-serine + ATP = L-seryl-tRNA(Ser) + AMP + diphosphate + H(+). It catalyses the reaction tRNA(Sec) + L-serine + ATP = L-seryl-tRNA(Sec) + AMP + diphosphate + H(+). It functions in the pathway aminoacyl-tRNA biosynthesis; selenocysteinyl-tRNA(Sec) biosynthesis; L-seryl-tRNA(Sec) from L-serine and tRNA(Sec): step 1/1. In terms of biological role, catalyzes the attachment of serine to tRNA(Ser). Is also able to aminoacylate tRNA(Sec) with serine, to form the misacylated tRNA L-seryl-tRNA(Sec), which will be further converted into selenocysteinyl-tRNA(Sec). The sequence is that of Serine--tRNA ligase from Caulobacter sp. (strain K31).